The sequence spans 104 residues: Small integral membrane protein 19 (104 aa).

The chain crosses the membrane as a helical span at residues 20-42; the sequence is AWNEATNVYLLVILVSFALLMYA.

Belongs to the SMIM19 family.

It localises to the membrane. This chain is Small integral membrane protein 19 (smim19), found in Danio rerio (Zebrafish).